The sequence spans 266 residues: Bax inhibitor 1 (266 aa).

The tract at residues 1–22 is disordered; the sequence is MPANYQSVPQDDPSVPNLAQAP. A run of 7 helical transmembrane segments spans residues 70–90, 92–112, 123–143, 147–167, 177–197, 201–221, and 240–260; these read LFVT…SFWV, MHPW…FGLI, IFLF…ITFF, IILE…AFTF, GGFL…FFFV, PFID…YILF, and LMLY…LGML.

The protein belongs to the BI1 family. LFG subfamily.

It localises to the endoplasmic reticulum membrane. The protein localises to the mitochondrion membrane. Its subcellular location is the golgi apparatus membrane. The protein resides in the vacuole membrane. Functionally, links the unfolded protein response and programmed cell death and mediates mitochondrial-dependent apoptosis. Induces cell death and disruption of the mitochondrial transmembrane potential. The protein is Bax inhibitor 1 (bxi1) of Schizosaccharomyces pombe (strain 972 / ATCC 24843) (Fission yeast).